A 185-amino-acid chain; its full sequence is Neuronal vesicle trafficking-associated protein 1 (185 aa).

The Cytoplasmic segment spans residues 1-82; the sequence is MVKLGNNFAE…ITEGVTERFK (82 aa). Residues 83-103 form a helical; Signal-anchor for type II membrane protein membrane-spanning segment; that stretch reads VSVLVLFALAFLTCVVFLVVY. The Lumenal segment spans residues 104 to 185; the sequence is KVYKYDRACP…QETEAAEKSA (82 aa). The required for GRIP1 interaction stretch occupies residues 129-164; the sequence is ESYYTEQDSSAREKFYTVINHYNLAKQSITRSVSPW.

The protein belongs to the NSG family. In terms of assembly, forms a complex with GRIP1, GRIA2 and STX12; controls the intracellular fate of AMPAR and the endosomal sorting of the GRIA2 subunit toward recycling and membrane targeting. Interacts with GRIP1. Interacts with STX12. Interacts with APP; could regulate APP processing. Interacts with FAM171A1. Widely expressed in brain and spinal cord. Expressed in neurons during maturation and synapse formation.

It is found in the membrane. Its subcellular location is the golgi apparatus. The protein resides in the trans-Golgi network membrane. It localises to the endosome membrane. The protein localises to the cell projection. It is found in the dendrite. Its subcellular location is the early endosome membrane. The protein resides in the late endosome membrane. It localises to the lysosome lumen. The protein localises to the recycling endosome membrane. It is found in the cytoplasmic vesicle membrane. Its subcellular location is the golgi stack membrane. The protein resides in the endosome. It localises to the multivesicular body membrane. The protein localises to the endoplasmic reticulum membrane. Functionally, plays a role in the recycling mechanism in neurons of multiple receptors, including AMPAR, APP and L1CAM and acts at the level of early endosomes to promote sorting of receptors toward a recycling pathway. Regulates sorting and recycling of GRIA2 through interaction with GRIP1 and then contributes to the regulation of synaptic transmission and plasticity by affecting the recycling and targeting of AMPA receptors to the synapse. Is required for faithful sorting of L1CAM to axons by facilitating trafficking from somatodendritic early endosome or the recycling endosome. In an other hand, induces apoptosis via the activation of CASP3 in response to DNA damage. This is Neuronal vesicle trafficking-associated protein 1 from Rattus norvegicus (Rat).